The primary structure comprises 705 residues: Elongation factor G (705 aa).

Positions 8–290 (AYYRNIGISA…AVIEYLPAPT (283 aa)) constitute a tr-type G domain. GTP-binding positions include 17-24 (AHIDAGKT), 88-92 (DTPGH), and 142-145 (NKMD).

The protein belongs to the TRAFAC class translation factor GTPase superfamily. Classic translation factor GTPase family. EF-G/EF-2 subfamily.

Its subcellular location is the cytoplasm. Its function is as follows. Catalyzes the GTP-dependent ribosomal translocation step during translation elongation. During this step, the ribosome changes from the pre-translocational (PRE) to the post-translocational (POST) state as the newly formed A-site-bound peptidyl-tRNA and P-site-bound deacylated tRNA move to the P and E sites, respectively. Catalyzes the coordinated movement of the two tRNA molecules, the mRNA and conformational changes in the ribosome. This chain is Elongation factor G, found in Baumannia cicadellinicola subsp. Homalodisca coagulata.